Reading from the N-terminus, the 355-residue chain is Glucose-1-phosphate thymidylyltransferase (355 aa).

Residues Asp107 and Asp220 each coordinate Mg(2+).

This sequence belongs to the glucose-1-phosphate thymidylyltransferase family. Mg(2+) serves as cofactor.

It catalyses the reaction dTTP + alpha-D-glucose 1-phosphate + H(+) = dTDP-alpha-D-glucose + diphosphate. It functions in the pathway antibiotic biosynthesis; streptomycin biosynthesis. Functionally, involved in the biosynthesis of the streptose moiety of streptomycin. Catalyzes the formation of dTDP-glucose, from dTTP and glucose 1-phosphate, as well as its pyrophosphorolysis. This chain is Glucose-1-phosphate thymidylyltransferase (strD), found in Streptomyces griseus.